The primary structure comprises 903 residues: MSCFASSIRRKKVDCNRHPNQDNDPERTVFSSGAVLFLDQLKRLPSNPRYVMSIGSVPAERSTIALFAHFDDVPDPHTLICSMYEWMQVSGPIQNLNPPKPSAEWFPEFQCTSTRSTIIQALYNINCGPPWSLLGRIRTEVTVLRCVQVTDAAGMPGLIRFERRTHFGRNLEAVTVTPLPESTNPSTDLAYLRSLYKSKLYTIILLEWDHKTFHGNDYDELRNSIAWLNIRLGSTRWSHVVNFVRNTTDADFALYGDYLTTFWELDVDTNTCTQMGMGAVYAGAFENIDVMLAEMLMYDSAATVDKPHSSNTRTSEISKIDFLIEDPPPPKHSDILQPVEDKYGWIRASENLEPRDPNTYITSVSPECMLYPSKDIAPCYRYTRDTVSRLYHKMELDGSAATHNNQGNYFPNGCDCDADESYVKELSEVYLDDLKWVVEECCRRANDMLISEKLKPWKETLNLHISGDSTTITSKVRQRKKVPPIMYFTGTWDDWLHRSHSTYTAEHNIQYRSSRRIRLDLFTERPVARSTMPPLHVSRCGAVALIKPFLRRLCNPPANRDCERVLLSMKQKLEDLDIDNTEVYPPQDLCFKVFIGTSITPIVRKFFSADWSRAGKCGRSNFRKELESTVRRISVPLEKSKPELAFIFSLSVVTSNVENGARTCTETLFSFGGAAIDMTTLIDGINKLLVLCDLLAVSGIRRLSTIESIPDIGTSPYRCILQRTTHITACMTPKVVRCENYNVLQSHWEECIVRSSEYLTYIPSQIEFVTHLTTRCPLKPENNDWYLGLFFPFKGFRVITAETKRWLAEYTRRFHKWFQWGEGSPHYAALRHLIPLCDCYLTDACMTNNFFGCGILFHMHCVPTPERESRIVAILTRALTEAQKYAESSLHVDIDTQNISIYN.

This is an uncharacterized protein from Gallid herpesvirus 2 (strain Chicken/Md5/ATCC VR-987) (GaHV-2).